Reading from the N-terminus, the 147-residue chain is Small ribosomal subunit protein uS9 (147 aa).

This sequence belongs to the universal ribosomal protein uS9 family.

The chain is Small ribosomal subunit protein uS9 (rps16) from Dictyostelium discoideum (Social amoeba).